We begin with the raw amino-acid sequence, 266 residues long: tRNA pseudouridine synthase A (266 aa).

Catalysis depends on D56, which acts as the Nucleophile. Y110 contacts substrate.

The protein belongs to the tRNA pseudouridine synthase TruA family.

The enzyme catalyses uridine(38/39/40) in tRNA = pseudouridine(38/39/40) in tRNA. Formation of pseudouridine at positions 38, 39 and 40 in the anticodon stem and loop of transfer RNAs. This is tRNA pseudouridine synthase A from Halobacterium salinarum (strain ATCC 29341 / DSM 671 / R1).